A 190-amino-acid chain; its full sequence is RNA-binding protein OPG065 (190 aa).

A Z-binding domain is found at 5-70 (YIDERSDAEI…DIPPRWFMTT (66 aa)). Positions 117 to 184 (NPVTIINEYC…AKLAVDKLLG (68 aa)) constitute a DRBM domain.

It belongs to the orthopoxvirus OPG065 family. Interacts with host G1P2/ISG15. Interacts with host EIF2AK2/PKR. Interacts with host ZBP1.

Its function is as follows. RNA-binding protein that plays a role in the inhibition of multiple cellular antiviral responses activated by double-stranded RNA (dsRNA), such as inhibition of PKR activation, necroptosis, and IFN-mediated antiviral activities. Recognizes and binds Z-RNA structures via its Z-binding domain and dsRNA via its DRBM domain: RNA-binding activity is required to escape host ZBP1-dependent necroptosis. Mechanistically, the Z-binding domain binds Z-RNAs that are produced during vaccinia virus infection, thereby competing with Z-RNA detection by host ZBP1, suppressing ZBP1-dependent necroptosis. Acts as a key inhibitor of the interferon response by blocking the phosphorylation and subsequent activation of IRF3 and IRF7 kinases that are required for interferon-alpha gene expression. Inhibits NF-kappa-B activation and the ubiquitin-like protein ISG15, which is an early antiviral protein. The binding with host ISG15 subsequently blocks host ISGylation. The polypeptide is RNA-binding protein OPG065 (OPG065) (Homo sapiens (Human)).